Reading from the N-terminus, the 101-residue chain is Small ribosomal subunit protein uS14 (101 aa).

Belongs to the universal ribosomal protein uS14 family. Part of the 30S ribosomal subunit. Contacts proteins S3 and S10.

In terms of biological role, binds 16S rRNA, required for the assembly of 30S particles and may also be responsible for determining the conformation of the 16S rRNA at the A site. In Francisella tularensis subsp. tularensis (strain FSC 198), this protein is Small ribosomal subunit protein uS14.